A 238-amino-acid chain; its full sequence is tRNA (guanine-N(7)-)-methyltransferase (238 aa).

Positions 68, 93, 120, and 143 each coordinate S-adenosyl-L-methionine. Asp143 is an active-site residue. Substrate is bound by residues Lys147, Asp179, and 216-219; that span reads TKFE.

Belongs to the class I-like SAM-binding methyltransferase superfamily. TrmB family.

The catalysed reaction is guanosine(46) in tRNA + S-adenosyl-L-methionine = N(7)-methylguanosine(46) in tRNA + S-adenosyl-L-homocysteine. It participates in tRNA modification; N(7)-methylguanine-tRNA biosynthesis. Functionally, catalyzes the formation of N(7)-methylguanine at position 46 (m7G46) in tRNA. This chain is tRNA (guanine-N(7)-)-methyltransferase, found in Ectopseudomonas mendocina (strain ymp) (Pseudomonas mendocina).